The sequence spans 96 residues: Dynein light chain roadblock-type 2 (96 aa).

N-acetylalanine is present on Ala-2.

Belongs to the GAMAD family. In terms of assembly, homodimer. The cytoplasmic dynein 1 complex consists of two catalytic heavy chains (HCs) and a number of non-catalytic subunits presented by intermediate chains (ICs), light intermediate chains (LICs) and light chains (LCs); the composition seems to vary in respect to the IC, LIC and LC composition. The heavy chain homodimer serves as a scaffold for the probable homodimeric assembly of the respective non-catalytic subunits. The ICs and LICs bind directly to the HC dimer and the LCs assemble on the IC dimer. Interacts with DYNC1I1 and DYNC1I2. Self-associates. Interacts with DYNLRB1. In terms of tissue distribution, high expression in heart, brain, placenta, skeletal muscle, prostate and small intestine; moderate in kidney, pancreas, spleen, testis, ovary and colon; low in lung, liver, thymus and leukocyte.

The protein resides in the cytoplasm. Its subcellular location is the cytoskeleton. Acts as one of several non-catalytic accessory components of the cytoplasmic dynein 1 complex that are thought to be involved in linking dynein to cargos and to adapter proteins that regulate dynein function. Cytoplasmic dynein 1 acts as a motor for the intracellular retrograde motility of vesicles and organelles along microtubules. The protein is Dynein light chain roadblock-type 2 (DYNLRB2) of Homo sapiens (Human).